Reading from the N-terminus, the 950-residue chain is Leucine--tRNA ligase (950 aa).

The short motif at 66–77 is the 'HIGH' region element; the sequence is PYPSGAGLHVGH. Positions 721-725 match the 'KMSKS' region motif; that stretch reads KIGKS. Residue Lys-724 participates in ATP binding.

It belongs to the class-I aminoacyl-tRNA synthetase family.

It localises to the cytoplasm. The enzyme catalyses tRNA(Leu) + L-leucine + ATP = L-leucyl-tRNA(Leu) + AMP + diphosphate. The sequence is that of Leucine--tRNA ligase from Nocardia farcinica (strain IFM 10152).